The sequence spans 31 residues: MEISTTQISIILLIALIPAFFSLKLGKELYK.

The helical transmembrane segment at 7 to 26 (QISIILLIALIPAFFSLKLG) threads the bilayer.

The protein belongs to the PsaM family.

The protein localises to the plastid. It is found in the chloroplast thylakoid membrane. This is Photosystem I reaction center subunit XII from Euglena myxocylindracea.